We begin with the raw amino-acid sequence, 86 residues long: Small ribosomal subunit protein bS20 (86 aa).

Belongs to the bacterial ribosomal protein bS20 family.

Binds directly to 16S ribosomal RNA. The sequence is that of Small ribosomal subunit protein bS20 from Mycolicibacterium vanbaalenii (strain DSM 7251 / JCM 13017 / BCRC 16820 / KCTC 9966 / NRRL B-24157 / PYR-1) (Mycobacterium vanbaalenii).